The chain runs to 451 residues: Tubulin alpha chain (451 aa).

The short motif at 1–4 is the MREC motif element; that stretch reads MREC. Residue Gln-11 coordinates GTP. Lys-40 is modified (N6-acetyllysine). The GTP site is built by Glu-71, Ser-140, Gly-144, Thr-145, Thr-179, Asn-206, and Asn-228. Glu-71 lines the Mg(2+) pocket. Glu-254 is an active-site residue. Residues 432-451 form a disordered region; it reads YEEVGVDSVEGEGEEEGEEY. Glu-445 is subject to 5-glutamyl polyglutamate.

The protein belongs to the tubulin family. Dimer of alpha and beta chains. A typical microtubule is a hollow water-filled tube with an outer diameter of 25 nm and an inner diameter of 15 nM. Alpha-beta heterodimers associate head-to-tail to form protofilaments running lengthwise along the microtubule wall with the beta-tubulin subunit facing the microtubule plus end conferring a structural polarity. Microtubules usually have 13 protofilaments but different protofilament numbers can be found in some organisms and specialized cells. Requires Mg(2+) as cofactor. Some glutamate residues at the C-terminus are polyglycylated, resulting in polyglycine chains on the gamma-carboxyl group. Glycylation is mainly limited to tubulin incorporated into axonemes (cilia and flagella) whereas glutamylation is prevalent in neuronal cells, centrioles, axonemes, and the mitotic spindle. Both modifications can coexist on the same protein on adjacent residues, and lowering polyglycylation levels increases polyglutamylation, and reciprocally. The precise function of polyglycylation is still unclear. Post-translationally, some glutamate residues at the C-terminus are polyglutamylated, resulting in polyglutamate chains on the gamma-carboxyl group. Polyglutamylation plays a key role in microtubule severing by spastin (SPAST). SPAST preferentially recognizes and acts on microtubules decorated with short polyglutamate tails: severing activity by SPAST increases as the number of glutamates per tubulin rises from one to eight, but decreases beyond this glutamylation threshold. In terms of processing, acetylation of alpha chains at Lys-40 is located inside the microtubule lumen. This modification has been correlated with increased microtubule stability, intracellular transport and ciliary assembly. Undergoes a tyrosination/detyrosination cycle, the cyclic removal and re-addition of a C-terminal tyrosine residue by the enzymes tubulin tyrosine carboxypeptidase (MATCAP, VASH1 or VASH2) and tubulin tyrosine ligase (TTL), respectively. Post-translationally, tyrosination promotes microtubule interaction with CAP-Gly microtubule plus-end tracking proteins. Tyrosinated tubulins regulate the initiation of dynein-driven motility. In terms of processing, detyrosination is involved in metaphase plate congression by guiding chromosomes during mitosis. Detyrosination increases microtubules-dependent mechanotransduction in dystrophic cardiac and skeletal muscle. In cardiomyocytes, detyrosinated microtubules are required to resist to contractile compression during contraction.

Its subcellular location is the cytoplasm. The protein resides in the cytoskeleton. The enzyme catalyses GTP + H2O = GDP + phosphate + H(+). Its function is as follows. Tubulin is the major constituent of microtubules, a cylinder consisting of laterally associated linear protofilaments composed of alpha- and beta-tubulin heterodimers. Microtubules grow by the addition of GTP-tubulin dimers to the microtubule end, where a stabilizing cap forms. Below the cap, tubulin dimers are in GDP-bound state, owing to GTPase activity of alpha-tubulin. In Torpedo marmorata (Marbled electric ray), this protein is Tubulin alpha chain.